The following is a 451-amino-acid chain: UDP-N-acetylmuramoylalanine--D-glutamate ligase (451 aa).

119–125 (GSNGKTT) contributes to the ATP binding site.

Belongs to the MurCDEF family.

The protein localises to the cytoplasm. The enzyme catalyses UDP-N-acetyl-alpha-D-muramoyl-L-alanine + D-glutamate + ATP = UDP-N-acetyl-alpha-D-muramoyl-L-alanyl-D-glutamate + ADP + phosphate + H(+). It functions in the pathway cell wall biogenesis; peptidoglycan biosynthesis. Functionally, cell wall formation. Catalyzes the addition of glutamate to the nucleotide precursor UDP-N-acetylmuramoyl-L-alanine (UMA). The protein is UDP-N-acetylmuramoylalanine--D-glutamate ligase of Geobacillus sp. (strain WCH70).